The primary structure comprises 328 residues: Naphthalene 1,2-dioxygenase system ferredoxin--NAD(P)(+), reductase component (328 aa).

A 2Fe-2S ferredoxin-type domain is found at 1–89; it reads MELLIQPNNR…NCAIEVPEAD (89 aa). [2Fe-2S] cluster-binding residues include C35, C40, C43, and C73. The FAD-binding FR-type domain occupies 96–193; it reads ARIIKGTVVA…SGPLGTAYLR (98 aa).

The protein belongs to the bacterial ring-hydroxylating dioxygenase ferredoxin reductase component family. The naphthalene dioxygenase (NDO) multicomponent enzyme system is composed of an electron transfer component and a dioxygenase component (iron sulfur protein (ISP)). The electron transfer component is composed of a ferredoxin reductase (NdoR) and a ferredoxin (NdoA), and the dioxygenase component is formed of a heterohexamer (trimer of heterodimers) of three large alpha subunits (NdoB) and three small beta subunits (NdoC). [2Fe-2S] cluster serves as cofactor. The cofactor is FAD.

The catalysed reaction is 2 reduced [2Fe-2S]-[ferredoxin] + NAD(+) + H(+) = 2 oxidized [2Fe-2S]-[ferredoxin] + NADH. It catalyses the reaction 2 reduced [2Fe-2S]-[ferredoxin] + NADP(+) + H(+) = 2 oxidized [2Fe-2S]-[ferredoxin] + NADPH. It functions in the pathway aromatic compound metabolism; naphthalene degradation. Strongly inhibited by p-chloromercuribenzoate. Also inhibited by N-ethylmaleimide and o-phenanthroline. Its function is as follows. Component of the naphthalene dioxygenase (NDO) multicomponent enzyme system which catalyzes the incorporation of both atoms of molecular oxygen into naphthalene to form cis-(1R,2S)-dihydroxy-1,2-dihydronaphthalene. Ferredoxin reductase catalyzes the transfer of electrons from NADH to ferredoxin (NdoA). NADPH is also effective but yields only 39% of the activity obtained with NADH. Also able to catalyze the cis-dihydroxylation of biphenyl and phenanthrene. The polypeptide is Naphthalene 1,2-dioxygenase system ferredoxin--NAD(P)(+), reductase component (ndoR) (Pseudomonas putida (Arthrobacter siderocapsulatus)).